Reading from the N-terminus, the 380-residue chain is Lipoyl synthase, mitochondrial (380 aa).

C104, C109, C115, C135, C139, C142, and S350 together coordinate [4Fe-4S] cluster. The Radical SAM core domain occupies 120 to 339; sequence EHGTQTATIM…ETRGNELGFL (220 aa).

It belongs to the radical SAM superfamily. Lipoyl synthase family. [4Fe-4S] cluster serves as cofactor.

The protein resides in the mitochondrion. The enzyme catalyses [[Fe-S] cluster scaffold protein carrying a second [4Fe-4S](2+) cluster] + N(6)-octanoyl-L-lysyl-[protein] + 2 oxidized [2Fe-2S]-[ferredoxin] + 2 S-adenosyl-L-methionine + 4 H(+) = [[Fe-S] cluster scaffold protein] + N(6)-[(R)-dihydrolipoyl]-L-lysyl-[protein] + 4 Fe(3+) + 2 hydrogen sulfide + 2 5'-deoxyadenosine + 2 L-methionine + 2 reduced [2Fe-2S]-[ferredoxin]. Its pathway is protein modification; protein lipoylation via endogenous pathway; protein N(6)-(lipoyl)lysine from octanoyl-[acyl-carrier-protein]: step 2/2. Functionally, catalyzes the radical-mediated insertion of two sulfur atoms into the C-6 and C-8 positions of the octanoyl moiety bound to the lipoyl domains of lipoate-dependent enzymes, thereby converting the octanoylated domains into lipoylated derivatives. The polypeptide is Lipoyl synthase, mitochondrial (Culex quinquefasciatus (Southern house mosquito)).